The following is a 340-amino-acid chain: MSSTALIHDDEALEPTLQSILDQKTLRWIFVGGKGGVGKTTTSCSLAIQLSKVRKSVLLISTDPAHNLSDAFGQKFGKEARLVDGFTNLSAMEIDPNGSIQDLLASGGEAQEDPLAGLGMGGMMQDLAFSIPGVDEAMSFAEVLKQVKSLSYEVIVFDTAPTGHTLRFLQFPTVLEKALAKLSQLSSQFGPMLNSILGSRGGLPGGQNLDDLMSKMESLRETISEVNTQFKNPDMTTFVCVCIAEFLSLYETERMIQELTSYGIDTHAIVVNQLLFPKKDNPCEQCNARRKMQKKYLEQIEELYEDFNVVRMPLLVEEVRGKEKLEKFSEMLVKPYVPPE.

Position 34–41 (34–41 (KGGVGKTT)) interacts with ATP. The active site involves Asp-63. ATP is bound by residues Glu-245 and Asn-272. Zn(2+) is bound by residues Cys-283 and Cys-286.

This sequence belongs to the arsA ATPase family. In terms of assembly, homodimer.

It is found in the cytoplasm. The protein resides in the endoplasmic reticulum. Functionally, ATPase required for the post-translational delivery of tail-anchored (TA) proteins to the endoplasmic reticulum. Recognizes and selectively binds the transmembrane domain of TA proteins in the cytosol. This complex then targets to the endoplasmic reticulum by membrane-bound receptors, where the tail-anchored protein is released for insertion. This process is regulated by ATP binding and hydrolysis. ATP binding drives the homodimer towards the closed dimer state, facilitating recognition of newly synthesized TA membrane proteins. ATP hydrolysis is required for insertion. Subsequently, the homodimer reverts towards the open dimer state, lowering its affinity for the membrane-bound receptor, and returning it to the cytosol to initiate a new round of targeting. This chain is ATPase get3 (get3), found in Talaromyces marneffei (strain ATCC 18224 / CBS 334.59 / QM 7333) (Penicillium marneffei).